A 455-amino-acid polypeptide reads, in one-letter code: ATP-dependent protease ATPase subunit HslU (455 aa).

ATP contacts are provided by residues I19, 61 to 66 (GVGKTE), D268, E333, and R405.

This sequence belongs to the ClpX chaperone family. HslU subfamily. As to quaternary structure, a double ring-shaped homohexamer of HslV is capped on each side by a ring-shaped HslU homohexamer. The assembly of the HslU/HslV complex is dependent on binding of ATP.

It localises to the cytoplasm. Functionally, ATPase subunit of a proteasome-like degradation complex; this subunit has chaperone activity. The binding of ATP and its subsequent hydrolysis by HslU are essential for unfolding of protein substrates subsequently hydrolyzed by HslV. HslU recognizes the N-terminal part of its protein substrates and unfolds these before they are guided to HslV for hydrolysis. This is ATP-dependent protease ATPase subunit HslU from Francisella philomiragia subsp. philomiragia (strain ATCC 25017 / CCUG 19701 / FSC 153 / O#319-036).